The primary structure comprises 54 residues: MDFLRILLFVLACIMALFTSAIAGGCIQRYGKCSTENSNCCAPSECYFSFNQCF.

A signal peptide spans 1-23 (MDFLRILLFVLACIMALFTSAIA). 3 disulfide bridges follow: Cys-26/Cys-41, Cys-33/Cys-46, and Cys-40/Cys-53.

Belongs to the venom Ptu1-like knottin family. Expressed by the venom gland.

The protein localises to the secreted. In terms of biological role, binds reversibly and blocks P/Q-type voltage-gated calcium channels (Cav). The protein is U-reduvitoxin-Pr7a of Platymeris rhadamanthus (Red spot assassin bug).